A 201-amino-acid polypeptide reads, in one-letter code: Holliday junction branch migration complex subunit RuvA (201 aa).

A domain I region spans residues 1 to 63 (MYAYIKGKLS…EDAQLLYGFM (63 aa)). Residues 64–142 (SEEEKGMFLS…ITEENPETLL (79 aa)) form a domain II region. Positions 143-153 (NFEGSESNQTS) are flexible linker. Positions 153–201 (SPILDEALLALEALGYSKRELNKVEKKLQAESYTSVDEAVKAGLKILVS) are domain III.

It belongs to the RuvA family. In terms of assembly, homotetramer. Forms an RuvA(8)-RuvB(12)-Holliday junction (HJ) complex. HJ DNA is sandwiched between 2 RuvA tetramers; dsDNA enters through RuvA and exits via RuvB. An RuvB hexamer assembles on each DNA strand where it exits the tetramer. Each RuvB hexamer is contacted by two RuvA subunits (via domain III) on 2 adjacent RuvB subunits; this complex drives branch migration. In the full resolvosome a probable DNA-RuvA(4)-RuvB(12)-RuvC(2) complex forms which resolves the HJ.

The protein localises to the cytoplasm. In terms of biological role, the RuvA-RuvB-RuvC complex processes Holliday junction (HJ) DNA during genetic recombination and DNA repair, while the RuvA-RuvB complex plays an important role in the rescue of blocked DNA replication forks via replication fork reversal (RFR). RuvA specifically binds to HJ cruciform DNA, conferring on it an open structure. The RuvB hexamer acts as an ATP-dependent pump, pulling dsDNA into and through the RuvAB complex. HJ branch migration allows RuvC to scan DNA until it finds its consensus sequence, where it cleaves and resolves the cruciform DNA. This is Holliday junction branch migration complex subunit RuvA from Staphylococcus carnosus (strain TM300).